The primary structure comprises 191 residues: Transposon Tn1546 resolvase (191 aa).

Residues 2 to 138 (RKIGYIRVSS…EGIELAKKEG (137 aa)) form the Resolvase/invertase-type recombinase catalytic domain. The O-(5'-phospho-DNA)-serine intermediate role is filled by serine 10. The H-T-H motif DNA-binding region spans 168 to 187 (VNQICEITNVSRASLYRKLS).

This sequence belongs to the site-specific recombinase resolvase family.

Functionally, resolvase catalyzes the resolution (a site-specific recombination) of the cointegrated replicon to yield the final transposition products. The polypeptide is Transposon Tn1546 resolvase (Enterococcus faecium (Streptococcus faecium)).